Reading from the N-terminus, the 240-residue chain is Mediator of RNA polymerase II transcription subunit 19-B (240 aa).

Over residues 1-14 (MTEIFSSLYGQPDS) the composition is skewed to polar residues. Disordered regions lie at residues 1-29 (MTEI…GSGK) and 168-240 (PKKK…SSLR). 2 stretches are compositionally biased toward basic residues: residues 168 to 180 (PKKK…KHHR) and 209 to 221 (KKKK…KKNR).

Belongs to the Mediator complex subunit 19 family. In terms of assembly, component of the Mediator complex.

It localises to the nucleus. Functionally, component of the Mediator complex, a coactivator involved in the regulated transcription of nearly all RNA polymerase II-dependent genes. Mediator functions as a bridge to convey information from gene-specific regulatory proteins to the basal RNA polymerase II transcription machinery. Mediator is recruited to promoters by direct interactions with regulatory proteins and serves as a scaffold for the assembly of a functional preinitiation complex with RNA polymerase II and the general transcription factors. In Danio rerio (Zebrafish), this protein is Mediator of RNA polymerase II transcription subunit 19-B (med19b).